A 204-amino-acid chain; its full sequence is ATP phosphoribosyltransferase (204 aa).

This sequence belongs to the ATP phosphoribosyltransferase family. Short subfamily. As to quaternary structure, heteromultimer composed of HisG and HisZ subunits.

It localises to the cytoplasm. It catalyses the reaction 1-(5-phospho-beta-D-ribosyl)-ATP + diphosphate = 5-phospho-alpha-D-ribose 1-diphosphate + ATP. It functions in the pathway amino-acid biosynthesis; L-histidine biosynthesis; L-histidine from 5-phospho-alpha-D-ribose 1-diphosphate: step 1/9. In terms of biological role, catalyzes the condensation of ATP and 5-phosphoribose 1-diphosphate to form N'-(5'-phosphoribosyl)-ATP (PR-ATP). Has a crucial role in the pathway because the rate of histidine biosynthesis seems to be controlled primarily by regulation of HisG enzymatic activity. This is ATP phosphoribosyltransferase from Hydrogenobaculum sp. (strain Y04AAS1).